The sequence spans 314 residues: Homeobox protein DBX1-A (314 aa).

The segment at residues 175–234 is a DNA-binding region (homeobox); sequence GMLRRAVFSDVQRKALEKMFQKQKYISKPDRKKLAAKLGLKDSQVKIWFQNRRMKWRNSK. Disordered stretches follow at residues 234-279 and 292-314; these read KERE…CAPS and STDS…ITVS. Positions 258–267 are enriched in basic and acidic residues; that stretch reads DLSDVGKKSS. Positions 305–314 are enriched in acidic residues; that stretch reads SESEDEITVS.

The protein belongs to the H2.0 homeobox family.

The protein localises to the nucleus. The chain is Homeobox protein DBX1-A (dbx1a) from Danio rerio (Zebrafish).